A 284-amino-acid chain; its full sequence is Pantothenate synthetase (284 aa).

30-37 (MGNLHDGH) contacts ATP. His-37 acts as the Proton donor in catalysis. A (R)-pantoate-binding site is contributed by Gln-61. Residue Gln-61 participates in beta-alanine binding. 149–152 (GEKD) provides a ligand contact to ATP. A (R)-pantoate-binding site is contributed by Gln-155. ATP contacts are provided by residues Val-178 and 186–189 (LSSR).

The protein belongs to the pantothenate synthetase family. Homodimer.

The protein localises to the cytoplasm. The catalysed reaction is (R)-pantoate + beta-alanine + ATP = (R)-pantothenate + AMP + diphosphate + H(+). The protein operates within cofactor biosynthesis; (R)-pantothenate biosynthesis; (R)-pantothenate from (R)-pantoate and beta-alanine: step 1/1. In terms of biological role, catalyzes the condensation of pantoate with beta-alanine in an ATP-dependent reaction via a pantoyl-adenylate intermediate. The sequence is that of Pantothenate synthetase from Erwinia tasmaniensis (strain DSM 17950 / CFBP 7177 / CIP 109463 / NCPPB 4357 / Et1/99).